Reading from the N-terminus, the 372-residue chain is Tomoregulin-1 (372 aa).

An N-terminal signal peptide occupies residues 1 to 36 (MGAQAPLRLPAAPPLAVCGYTSVLLLFAFCLPGSRA). The Extracellular portion of the chain corresponds to 37-322 (SNQPAGGGGD…VPSRQKLTHV (286 aa)). Asn-55 carries an N-linked (GlcNAc...) asparagine glycan. Positions 90–137 (ACQFQCHTNYIPVCGSNGDTYQNECFLRRAACKHQKDITVVARGPCYS) constitute a Kazal-like 1 domain. 3 cysteine pairs are disulfide-bonded: Cys-91–Cys-121, Cys-95–Cys-114, and Cys-103–Cys-135. The N-linked (GlcNAc...) asparagine glycan is linked to Asn-139. The interval 139–161 (NGSGSGEGEEEGSGAGAHRKHSK) is disordered. In terms of domain architecture, Kazal-like 2 spans 181 to 229 (VCNIDCSGYSFNPVCASDGSSYNNPCFVREASCIKQEQIDIRHLGHCTD). Cystine bridges form between Cys-182-Cys-213, Cys-186-Cys-206, Cys-195-Cys-227, Cys-267-Cys-280, Cys-275-Cys-291, and Cys-293-Cys-302. One can recognise an EGF-like domain in the interval 263-303 (SHMPCPENLNGYCIHGKCEFIYSTQKASCRCESGYTGQHCE). The helical transmembrane segment at 323-343 (LIAAIIGAVQIAIIVAIVMCI) threads the bilayer. The Cytoplasmic segment spans residues 344–372 (TRKCPKNNRGRRQKQNLGHFTSDTSSRMV). Residues 351 to 372 (NRGRRQKQNLGHFTSDTSSRMV) are disordered. A compositionally biased stretch (polar residues) spans 358-372 (QNLGHFTSDTSSRMV).

Belongs to the tomoregulin family. In terms of assembly, may interact with ST14. As to expression, maily expressed in neurons. Expressed in brain, neurointermediate lobe, pars distalis, pancreas, ovary and testis.

The protein resides in the cell membrane. Its function is as follows. Neuron-specific restriction factor that prevents herpes simplex virus 1 (HHV-1) infection in the brain by blocking viral entry. Also able to restrict herpes simplex virus 2 (HHV-2) infection, although to a lesser extent. Acts by preventing the association between the viral glycoprotein D (gD) and its cell surface receptor NECTIN1, thereby inhibiting fusion of the virus and the cell membrane. Also able to prevent the association between the viral glycoprotein B (gB) and MYH9/NMMHC-IIA and MYH10/NMMHC-IIB receptors. This chain is Tomoregulin-1, found in Mus musculus (Mouse).